The sequence spans 111 residues: Ribosome-binding factor A (111 aa).

This sequence belongs to the RbfA family. As to quaternary structure, monomer. Binds 30S ribosomal subunits, but not 50S ribosomal subunits or 70S ribosomes.

The protein localises to the cytoplasm. One of several proteins that assist in the late maturation steps of the functional core of the 30S ribosomal subunit. Associates with free 30S ribosomal subunits (but not with 30S subunits that are part of 70S ribosomes or polysomes). Required for efficient processing of 16S rRNA. May interact with the 5'-terminal helix region of 16S rRNA. The polypeptide is Ribosome-binding factor A (Helicobacter pylori (strain G27)).